We begin with the raw amino-acid sequence, 217 residues long: Hypersensitivity response secretion protein HrcR (217 aa).

The next 4 membrane-spanning stretches (helical) occupy residues 6–26 (FASL…AMVV), 52–72 (MVLN…VGME), 158–178 (IGFL…NLLM), and 190–210 (VAIP…VLIH).

Belongs to the FliP/MopC/SpaP family.

It localises to the cell membrane. Its function is as follows. Involved in the secretion of PopA, a proteinaceous elicitor of the hypersensitivity response in plants. This Ralstonia nicotianae (strain ATCC BAA-1114 / GMI1000) (Ralstonia solanacearum) protein is Hypersensitivity response secretion protein HrcR (hrcR).